The primary structure comprises 71 residues: Guanine nucleotide-binding protein G(I)/G(S)/G(O) subunit gamma-2 (71 aa).

A2 bears the N-acetylalanine mark. C68 carries the cysteine methyl ester modification. C68 carries S-geranylgeranyl cysteine lipidation. The propeptide at 69-71 (AIL) is removed in mature form.

This sequence belongs to the G protein gamma family. As to quaternary structure, g proteins are composed of 3 units, alpha, beta and gamma. In this context, interacts with GNB2. The heterodimer formed by GNB1 and GNG2 interacts with ARHGEF5. The heterodimer formed by GNB1 and GNG2 interacts with GRK2. Component of the TAS2R14-GNAI1 complex, consisting of TAS2R14, GNAI1, GNB1 and GNG2. Forms complexes with TAS2R14 and G-proteins; these complexes play a role in the perception of bitterness. Component of the TAS2R14-GNAT3 complex, consisting of TAS2R14, GNAT3, GNB1 and GNG2. Component of the TAS2R14-GNAS2 complex, consisting of TAS2R14, GNAS2, GNB1 and GNG2. As to expression, adrenal gland and brain.

The protein resides in the cell membrane. In terms of biological role, guanine nucleotide-binding proteins (G proteins) are involved as a modulator or transducer in various transmembrane signaling systems. The beta and gamma chains are required for the GTPase activity, for replacement of GDP by GTP, and for G protein-effector interaction. The chain is Guanine nucleotide-binding protein G(I)/G(S)/G(O) subunit gamma-2 (GNG2) from Bos taurus (Bovine).